We begin with the raw amino-acid sequence, 214 residues long: A-type ATP synthase subunit D (214 aa).

The protein belongs to the V-ATPase D subunit family. In terms of assembly, has multiple subunits with at least A(3), B(3), C, D, E, F, H, I and proteolipid K(x).

It is found in the cell membrane. Functionally, component of the A-type ATP synthase that produces ATP from ADP in the presence of a proton gradient across the membrane. The chain is A-type ATP synthase subunit D from Pyrococcus horikoshii (strain ATCC 700860 / DSM 12428 / JCM 9974 / NBRC 100139 / OT-3).